We begin with the raw amino-acid sequence, 373 residues long: Histidinol-phosphate aminotransferase (373 aa).

Lysine 230 carries the post-translational modification N6-(pyridoxal phosphate)lysine.

It belongs to the class-II pyridoxal-phosphate-dependent aminotransferase family. Histidinol-phosphate aminotransferase subfamily. In terms of assembly, homodimer. It depends on pyridoxal 5'-phosphate as a cofactor.

It catalyses the reaction L-histidinol phosphate + 2-oxoglutarate = 3-(imidazol-4-yl)-2-oxopropyl phosphate + L-glutamate. It participates in amino-acid biosynthesis; L-histidine biosynthesis; L-histidine from 5-phospho-alpha-D-ribose 1-diphosphate: step 7/9. In Synechococcus elongatus (strain ATCC 33912 / PCC 7942 / FACHB-805) (Anacystis nidulans R2), this protein is Histidinol-phosphate aminotransferase.